The primary structure comprises 231 residues: uncharacterized protein (231 aa).

10–34 (VVTGAGSGIGEAIATLLHEEGAKVV) serves as a coordination point for NADP(+). Ser-140 contributes to the substrate binding site. Tyr-153 functions as the Proton acceptor in the catalytic mechanism.

This sequence belongs to the short-chain dehydrogenases/reductases (SDR) family.

This is an uncharacterized protein from Staphylococcus aureus (strain N315).